The chain runs to 79 residues: Dermaseptin-S8 (79 aa).

Residues 1–22 (MDILKKSLFLVLFLGLVSLSIC) form the signal peptide. A propeptide spanning residues 23 to 45 (EEEKRENEDEEKQEDDEQSEMKR) is cleaved from the precursor. Residue glutamine 76 is modified to Glutamine amide. The propeptide occupies 78–79 (AQ).

Belongs to the frog skin active peptide (FSAP) family. Dermaseptin subfamily. Expressed by the skin glands.

Its subcellular location is the secreted. In terms of biological role, potent antimicrobial peptide with activity against bacteria, fungi and protozoa. Probably acts by disturbing membrane functions with its amphipathic structure. The sequence is that of Dermaseptin-S8 from Phyllomedusa sauvagei (Sauvage's leaf frog).